We begin with the raw amino-acid sequence, 260 residues long: Cytosolic Fe-S cluster assembly factor Nubp2 homolog (260 aa).

14–21 contacts ATP; it reads GKGGVGKS. Residues Cys-188 and Cys-191 each coordinate [4Fe-4S] cluster.

Belongs to the Mrp/NBP35 ATP-binding proteins family. NUBP2/CFD1 subfamily. In terms of assembly, heterotetramer of 2 Nubp1 and 2 Nubp2 chains. It depends on [4Fe-4S] cluster as a cofactor.

It localises to the cytoplasm. Functionally, component of the cytosolic iron-sulfur (Fe/S) protein assembly (CIA) machinery. Required for maturation of extramitochondrial Fe-S proteins. The Nubp1-Nubp2 heterotetramer forms a Fe-S scaffold complex, mediating the de novo assembly of an Fe-S cluster and its transfer to target apoproteins. This Drosophila melanogaster (Fruit fly) protein is Cytosolic Fe-S cluster assembly factor Nubp2 homolog.